The following is a 525-amino-acid chain: ALBINO3-like protein 2, chloroplastic (525 aa).

The next 4 helical transmembrane spans lie at 99-119, 167-187, 217-237, and 262-282; these read WMII…LLIL, LWFF…MASI, FGPV…QISF, and ILSV…LVYW. TPR repeat units lie at residues 346 to 379, 380 to 413, 425 to 458, and 467 to 500; these read PEEL…DPGY, VRGL…LLDE, MLAS…REPG, and FEAL…NPAY.

This sequence belongs to the OXA1/ALB3/YidC (TC 2.A.9.2) family.

It localises to the plastid. Its subcellular location is the chloroplast thylakoid membrane. Functionally, probably required for the insertion of integral membrane proteins into the chloroplast thylakoid membranes. This is ALBINO3-like protein 2, chloroplastic (ALB3L2) from Arabidopsis thaliana (Mouse-ear cress).